A 128-amino-acid polypeptide reads, in one-letter code: Sulfurtransferase TusD (128 aa).

Cys78 (cysteine persulfide intermediate) is an active-site residue.

This sequence belongs to the DsrE/TusD family. Heterohexamer, formed by a dimer of trimers. The hexameric TusBCD complex contains 2 copies each of TusB, TusC and TusD. The TusBCD complex interacts with TusE.

Its subcellular location is the cytoplasm. In terms of biological role, part of a sulfur-relay system required for 2-thiolation of 5-methylaminomethyl-2-thiouridine (mnm(5)s(2)U) at tRNA wobble positions. Accepts sulfur from TusA and transfers it in turn to TusE. The sequence is that of Sulfurtransferase TusD from Shigella flexneri serotype 5b (strain 8401).